Consider the following 139-residue polypeptide: Small ribosomal subunit protein uS12m (139 aa).

The N-terminal 29 residues, 1–29, are a transit peptide targeting the mitochondrion; that stretch reads MSWSGPLRGLNTSLTCGPALVPRLWATCS. The tract at residues 36-56 is disordered; the sequence is MHRLGGPPKRPPQKLGPTEGR.

This sequence belongs to the universal ribosomal protein uS12 family. In terms of assembly, component of the mitochondrial ribosome small subunit (28S) which comprises a 12S rRNA and about 30 distinct proteins.

It is found in the mitochondrion. This Pongo abelii (Sumatran orangutan) protein is Small ribosomal subunit protein uS12m (MRPS12).